The following is a 681-amino-acid chain: Chaperone protein HtpG (681 aa).

An a; substrate-binding region spans residues Met1 to Arg326. The interval Ser327 to Asn545 is b. The interval Ile546–Ile681 is c. Residues Asp601–Lys620 form a disordered region.

This sequence belongs to the heat shock protein 90 family. As to quaternary structure, homodimer.

The protein resides in the cytoplasm. Functionally, molecular chaperone. Has ATPase activity. The protein is Chaperone protein HtpG of Bacteroides fragilis (strain ATCC 25285 / DSM 2151 / CCUG 4856 / JCM 11019 / LMG 10263 / NCTC 9343 / Onslow / VPI 2553 / EN-2).